The primary structure comprises 177 residues: Chorismate pyruvate-lyase (177 aa).

Substrate-binding residues include M36, R78, L116, and E157.

It belongs to the UbiC family. As to quaternary structure, monomer.

It localises to the cytoplasm. It carries out the reaction chorismate = 4-hydroxybenzoate + pyruvate. The protein operates within cofactor biosynthesis; ubiquinone biosynthesis. In terms of biological role, removes the pyruvyl group from chorismate, with concomitant aromatization of the ring, to provide 4-hydroxybenzoate (4HB) for the ubiquinone pathway. In Pectobacterium carotovorum subsp. carotovorum (strain PC1), this protein is Chorismate pyruvate-lyase.